Reading from the N-terminus, the 361-residue chain is Protein RecA (361 aa).

77 to 84 (GPESSGKT) serves as a coordination point for ATP.

Belongs to the RecA family.

The protein resides in the cytoplasm. Can catalyze the hydrolysis of ATP in the presence of single-stranded DNA, the ATP-dependent uptake of single-stranded DNA by duplex DNA, and the ATP-dependent hybridization of homologous single-stranded DNAs. It interacts with LexA causing its activation and leading to its autocatalytic cleavage. The chain is Protein RecA from Brucella abortus (strain S19).